The following is a 775-amino-acid chain: Melanoma-associated antigen D1 (775 aa).

Residues 37–330 (SEAPPTSQAT…PARQTPSAWQ (294 aa)) form a disordered region. Residues 39-50 (APPTSQATAAAS) show a composition bias toward low complexity. Composition is skewed to polar residues over residues 52–63 (PNASPQSSQPPT), 84–100 (KAQN…SQAR), 150–180 (GQNT…NQPK), 223–237 (AQTS…NVES), 250–260 (NNLNVEENSNG), and 297–330 (LAWQ…SAWQ). 19 consecutive repeat copies span residues 293–298 (WQTPLA), 299–304 (WQNPSG), 305–310 (WQNQTA), 329–334 (WQNPVA), 335–340 (WQNPVI), 341–346 (WPNPVI), 347–352 (WQNPVI), 353–358 (WPNPIV), 359–364 (WPGPIV), 365–370 (WPNPMA), 371–376 (WQSTPG), 377–382 (WQSPPS), 383–388 (WQAPPS), 389–394 (WQSPQD), 395–400 (WQGPPD), 401–406 (WQLPPD), 407–412 (WSMPPD), 413–418 (WSFPSD), and 419–424 (WPFPPD). The segment at 293–441 (WQTPLAWQNP…IPPDWQNLRP (149 aa)) is 22 X 6 AA tandem repeats of W-[PQ]-X-P-X-X. Residues 374–407 (TPGWQSPPSWQAPPSWQSPQDWQGPPDWQLPPDW) are disordered. The span at 375–406 (PGWQSPPSWQAPPSWQSPQDWQGPPDWQLPPD) shows a compositional bias: low complexity. The stretch at 425–429 (WIPAD) is one 20; approximate repeat. 2 consecutive repeat copies span residues 430–435 (WPIPPD) and 436–441 (WQNLRP). Low complexity predominate over residues 437-452 (QNLRPSPNLRSSPNSR). Residues 437–463 (QNLRPSPNLRSSPNSRASQNQGPPQPR) form a disordered region. The MAGE domain occupies 468 to 666 (LQERANKLVK…RDWTAQFMEA (199 aa)).

In terms of assembly, interacts with DLX5, DLX7 and MSX2 and forms homomultimers. Interacts with UNC5A. Interacts with TRIM28 and PJA1. Interacts with NGFR/p75NTR and RORA. Ubiquitous and in the seminiferous tubules expressed in Sertoli cells but not in germ cells. Expression decreases in all tissues with increased age and is detectable only in brain cortex and lung.

It is found in the cytoplasm. It localises to the cell membrane. The protein localises to the nucleus. Its function is as follows. Involved in the apoptotic response after nerve growth factor (NGF) binding in neuronal cells. Inhibits cell cycle progression, and facilitates NGFR-mediated apoptosis. May act as a regulator of the function of DLX family members. May enhance ubiquitin ligase activity of RING-type zinc finger-containing E3 ubiquitin-protein ligases. Proposed to act through recruitment and/or stabilization of the Ubl-conjugating enzyme (E2) at the E3:substrate complex. Plays a role in the circadian rhythm regulation. May act as RORA co-regulator, modulating the expression of core clock genes such as BMAL1 and NFIL3, induced, or NR1D1, repressed. The sequence is that of Melanoma-associated antigen D1 (Maged1) from Rattus norvegicus (Rat).